Here is a 214-residue protein sequence, read N- to C-terminus: tRNA (guanine-N(7)-)-methyltransferase (214 aa).

Positions 44, 69, 96, and 118 each coordinate S-adenosyl-L-methionine. Aspartate 118 is an active-site residue. Lysine 122 lines the substrate pocket. The interaction with RNA stretch occupies residues 124–129 (RHEKRR). Substrate is bound by residues aspartate 154 and 192–195 (TEYE).

The protein belongs to the class I-like SAM-binding methyltransferase superfamily. TrmB family.

It carries out the reaction guanosine(46) in tRNA + S-adenosyl-L-methionine = N(7)-methylguanosine(46) in tRNA + S-adenosyl-L-homocysteine. Its pathway is tRNA modification; N(7)-methylguanine-tRNA biosynthesis. Its function is as follows. Catalyzes the formation of N(7)-methylguanine at position 46 (m7G46) in tRNA. The sequence is that of tRNA (guanine-N(7)-)-methyltransferase from Lactiplantibacillus plantarum (strain ATCC BAA-793 / NCIMB 8826 / WCFS1) (Lactobacillus plantarum).